Consider the following 113-residue polypeptide: U11-theraphotoxin-Hhn1a (113 aa).

Residues 1–21 (MNTVRVTFLLVFVLAVSLGQA) form the signal peptide. The propeptide occupies 22–74 (DKDENRMEMQEKTEQGKSYLDFAENLLLQKLEELVAKLLEEDSEESRNSRQKR). 3 cysteine pairs are disulfide-bonded: cysteine 75-cysteine 90, cysteine 82-cysteine 95, and cysteine 89-cysteine 110.

It belongs to the neurotoxin 14 (magi-1) family. 01 (HNTX-16) subfamily. In terms of tissue distribution, expressed by the venom gland.

The protein resides in the secreted. Functionally, probable ion channel inhibitor. The polypeptide is U11-theraphotoxin-Hhn1a (Cyriopagopus hainanus (Chinese bird spider)).